Consider the following 387-residue polypeptide: O-methyltransferase asqD (387 aa).

Residue Asp252 participates in S-adenosyl-L-methionine binding. Catalysis depends on His294, which acts as the Proton acceptor.

This sequence belongs to the class I-like SAM-binding methyltransferase superfamily. Cation-independent O-methyltransferase family.

Its pathway is secondary metabolite biosynthesis. It functions in the pathway alkaloid biosynthesis. It participates in mycotoxin biosynthesis. Functionally, O-methyltransferase; part of the gene cluster that mediates the biosynthesis of the aspoquinolone mycotoxins. The role of asqD within the aspoquinolone pathway has still to be determined. The first step of the pathway is catalyzed by the nonribosomal peptide synthetase asqK that condenses anthranilic acid and O-methyl-L-tyrosine to produce 4'-methoxycyclopeptin. 4'-methoxycyclopeptin is then converted to 4'-methoxydehydrocyclopeptin by the ketoglutarate-dependent dioxygenase asqJ. AsqJ also converts its first product 4'-methoxydehydrocyclopeptin to 4'-methoxycyclopenin. The following conversion of 4'-methoxycyclopenin into 4'-methoxyviridicatin is catalyzed by the cyclopenase asqI. 4'-methoxyviridicatin is the precursor of quinolone natural products, and is further converted to quinolinone B. The prenyltransferase asqH1 then catalyzes the canonical Friedel-Crafts alkylation of quinolinone B with dimethylallyl cation to yield dimethylallyl quinolone, which is subjected to FAD-dependent dehydrogenation by the FAD-linked oxidoreductase asqF to yield conjugated aryl diene. The delta(3') double bond then serves as the site of the second alkylation with DMAPP catalyzed by the prenyltransferase asqH2 to yield a carbenium ion intermediate, which can be attacked by H(2)O to yield a styrenyl quinolone containing a C3'-hydroxyprenyl chain. The FAD-dependent monooxygenase asqG performs epoxidation of the terminal C7'-C8' olefin. Finally, after dehydratation of the epoxide at C3 by asqC, the quinolone epoxide rearrangement protein asqO catalyzes an enzymatic 3-exo-tet cyclization to yield the cyclopropyl-THF ring system in aspoquinolone. This Emericella nidulans (strain FGSC A4 / ATCC 38163 / CBS 112.46 / NRRL 194 / M139) (Aspergillus nidulans) protein is O-methyltransferase asqD.